The primary structure comprises 286 residues: ATP synthase gamma chain (286 aa).

It belongs to the ATPase gamma chain family. F-type ATPases have 2 components, CF(1) - the catalytic core - and CF(0) - the membrane proton channel. CF(1) has five subunits: alpha(3), beta(3), gamma(1), delta(1), epsilon(1). CF(0) has three main subunits: a, b and c.

The protein localises to the cell inner membrane. Its function is as follows. Produces ATP from ADP in the presence of a proton gradient across the membrane. The gamma chain is believed to be important in regulating ATPase activity and the flow of protons through the CF(0) complex. This is ATP synthase gamma chain from Shewanella halifaxensis (strain HAW-EB4).